The chain runs to 589 residues: TAF5-like RNA polymerase II p300/CBP-associated factor-associated factor 65 kDa subunit 5L (589 aa).

The span at 211-221 (ASGSSSRSENN) shows a compositional bias: polar residues. The segment at 211-230 (ASGSSSRSENNGLEPPDMPS) is disordered. 6 WD repeats span residues 266–305 (NTEQLLNTAEISPDSKLLAAGFDNSCIKLWSLRSKKLKSE), 340–379 (GHCGPVYSTRFLADSSGLLSCSEDMSIRYWDLGSFTNTVL), 382–421 (GHAYPVWDLDISPYSLYFASGSHDRTARLWSFDRTYPLRI), 424–463 (GHLADVDCVKFHPNSNYLATGSTDKTVRLWSAQQGNSVRL), 466–505 (GHRGPVLSLAFSPNGKYLASAGEDQRLKLWDLASGTLYKE), and 508–547 (GHTDNITSLTFSPDSGLIASASMDNSVRVWDIRNTYCSAP).

Belongs to the WD repeat TAF5 family. In terms of assembly, the PCAF complex is composed of a number of TBP-associated factors (TAFS), such as TAF5, TAF5L, TAF6, TAF6L, TAF9, TAF10 and TAF12, PCAF, and also PCAF-associated factors (PAFs), such as TADA2L/ADA2, TADA3L/ADA3 and SPT3. Component of the STAGA transcription coactivator-HAT complex, at least composed of SUPT3H, GCN5L2, TAF5L, TAF6L, SUPT7L, TADA3L, TAD1L, TAF10, TAF12, TRRAP and TAF9.

It localises to the nucleus. Functions as a component of the PCAF complex. The PCAF complex is capable of efficiently acetylating histones in a nucleosomal context. The PCAF complex could be considered as the human version of the yeast SAGA complex. With TAF6L, acts as an epigenetic regulator essential for somatic reprogramming. Regulates target genes through H3K9ac deposition and MYC recruitment which trigger MYC regulatory network to orchestrate gene expression programs to control embryonic stem cell state. The protein is TAF5-like RNA polymerase II p300/CBP-associated factor-associated factor 65 kDa subunit 5L of Homo sapiens (Human).